Consider the following 357-residue polypeptide: Membrane-bound lytic murein transglycosylase C (357 aa).

Positions M1 to A17 are cleaved as a signal peptide. A lipid anchor (N-palmitoyl cysteine) is attached at C18. A lipid anchor (S-diacylglycerol cysteine) is attached at C18.

The protein belongs to the transglycosylase Slt family.

It localises to the cell outer membrane. It catalyses the reaction Exolytic cleavage of the (1-&gt;4)-beta-glycosidic linkage between N-acetylmuramic acid (MurNAc) and N-acetylglucosamine (GlcNAc) residues in peptidoglycan, from either the reducing or the non-reducing ends of the peptidoglycan chains, with concomitant formation of a 1,6-anhydrobond in the MurNAc residue.. Functionally, murein-degrading enzyme. May play a role in recycling of muropeptides during cell elongation and/or cell division. The chain is Membrane-bound lytic murein transglycosylase C from Mannheimia succiniciproducens (strain KCTC 0769BP / MBEL55E).